Here is a 232-residue protein sequence, read N- to C-terminus: MDRMMKSKFVALALSLFLSQSVLAGGVGLSSTRVIYDGSKKEASLTVQNKSKTEEFLIQSWVDDAAGSKKTPFIITPPLFKLDPEKNNILRIVNITPGLPQDRESVYWVNVKAIPSKSDDSENKNVLQIAVRTRIKLFYRPAGLKGDVKTAPNELRFTRNGNQLRVDNPTVFNITFNQFFANDKEIEKAGMVPAKGALNITLPAGVGSVSKIKYNTINDFGSXAEMITKNVD.

Residues 1–24 (MDRMMKSKFVALALSLFLSQSVLA) form the signal peptide.

The protein belongs to the periplasmic pilus chaperone family.

It is found in the periplasm. Its function is as follows. Part of the lpfABCC'DE fimbrial operon. LP fimbriae may participate in the interaction with eukaryotic cells by assisting in microcolony formation. This is Probable fimbrial chaperone LpfB (lpfB) from Escherichia coli O157:H7.